The sequence spans 390 residues: Oxygen-dependent coproporphyrinogen-III oxidase (390 aa).

Residues 131-140 form an important for dimerization region; the sequence is VLQDGDVFEK. S181 provides a ligand contact to substrate. H195 acts as the Proton donor in catalysis. Substrate contacts are provided by residues 197–199 and 348–353; these read NYR and GARYES. The interval 329–365 is important for dimerization; the sequence is YVEFNLIYDRGTKFGLYTPGARYESILMSLPLHARWE.

It belongs to the aerobic coproporphyrinogen-III oxidase family. In terms of assembly, homodimer.

The catalysed reaction is coproporphyrinogen III + O2 + 2 H(+) = protoporphyrinogen IX + 2 CO2 + 2 H2O. Its pathway is porphyrin-containing compound metabolism; protoporphyrin-IX biosynthesis; protoporphyrinogen-IX from coproporphyrinogen-III (O2 route): step 1/1. Its function is as follows. Involved in the heme biosynthesis. Catalyzes the aerobic oxidative decarboxylation of propionate groups of rings A and B of coproporphyrinogen-III to yield the vinyl groups in protoporphyrinogen-IX. The chain is Oxygen-dependent coproporphyrinogen-III oxidase (Coprox) from Drosophila melanogaster (Fruit fly).